The sequence spans 158 residues: Ribosome-binding factor A (158 aa).

Positions 114 to 158 (AKDAEVRQVSTGAQYAGDADPYRKPEDEDEETDGSSEKNEGPASA) are disordered. The span at 148–158 (SSEKNEGPASA) shows a compositional bias: basic and acidic residues.

The protein belongs to the RbfA family. As to quaternary structure, monomer. Binds 30S ribosomal subunits, but not 50S ribosomal subunits or 70S ribosomes.

The protein resides in the cytoplasm. One of several proteins that assist in the late maturation steps of the functional core of the 30S ribosomal subunit. Associates with free 30S ribosomal subunits (but not with 30S subunits that are part of 70S ribosomes or polysomes). Required for efficient processing of 16S rRNA. May interact with the 5'-terminal helix region of 16S rRNA. This is Ribosome-binding factor A from Streptomyces griseus subsp. griseus (strain JCM 4626 / CBS 651.72 / NBRC 13350 / KCC S-0626 / ISP 5235).